The chain runs to 92 residues: Signal recognition particle 19 kDa protein (92 aa).

Belongs to the SRP19 family. In terms of assembly, part of the signal recognition particle protein translocation system, which is composed of SRP and FtsY. Archaeal SRP consists of a 7S RNA molecule of 300 nucleotides and two protein subunits: SRP54 and SRP19.

The protein localises to the cytoplasm. Its function is as follows. Involved in targeting and insertion of nascent membrane proteins into the cytoplasmic membrane. Binds directly to 7S RNA and mediates binding of the 54 kDa subunit of the SRP. This Halorubrum lacusprofundi (strain ATCC 49239 / DSM 5036 / JCM 8891 / ACAM 34) protein is Signal recognition particle 19 kDa protein.